The sequence spans 361 residues: UDP-3-O-acylglucosamine N-acyltransferase (361 aa).

His-253 serves as the catalytic Proton acceptor.

This sequence belongs to the transferase hexapeptide repeat family. LpxD subfamily. As to quaternary structure, homotrimer.

It carries out the reaction a UDP-3-O-[(3R)-3-hydroxyacyl]-alpha-D-glucosamine + a (3R)-hydroxyacyl-[ACP] = a UDP-2-N,3-O-bis[(3R)-3-hydroxyacyl]-alpha-D-glucosamine + holo-[ACP] + H(+). Its pathway is bacterial outer membrane biogenesis; LPS lipid A biosynthesis. Its function is as follows. Catalyzes the N-acylation of UDP-3-O-acylglucosamine using 3-hydroxyacyl-ACP as the acyl donor. Is involved in the biosynthesis of lipid A, a phosphorylated glycolipid that anchors the lipopolysaccharide to the outer membrane of the cell. This chain is UDP-3-O-acylglucosamine N-acyltransferase, found in Burkholderia pseudomallei (strain 1710b).